The sequence spans 329 residues: AUGMIN subunit 7 (329 aa).

Residues 169-197 adopt a coiled-coil conformation; sequence DVSELETKLSEQAKILSNLQQKVDDLAAK.

As to quaternary structure, part of the augmin complex composed of 8 subunits. The complex acts on microtubules and interacts with gamma-tubulin in spindles and the phragmoplast.

The protein resides in the cytoplasm. Its subcellular location is the cytoskeleton. It is found in the spindle. The protein localises to the phragmoplast. In terms of biological role, contributes to the assembly of the acentrosomal spindle and phragmoplast microtubule arrays as part of the augmin complex. Regulates the association of gamma-tubulin with the spindle and phragmoplast microtubules. The sequence is that of AUGMIN subunit 7 from Arabidopsis thaliana (Mouse-ear cress).